The sequence spans 278 residues: Energy-coupling factor transporter ATP-binding protein EcfA1 (278 aa).

An ABC transporter domain is found at 5 to 240 (IEVRNLKYKY…EDLEELGLDQ (236 aa)). 40–47 (GHNGSGKS) serves as a coordination point for ATP.

It belongs to the ABC transporter superfamily. Energy-coupling factor EcfA family. Forms a stable energy-coupling factor (ECF) transporter complex composed of 2 membrane-embedded substrate-binding proteins (S component), 2 ATP-binding proteins (A component) and 2 transmembrane proteins (T component).

Its subcellular location is the cell membrane. In terms of biological role, ATP-binding (A) component of a common energy-coupling factor (ECF) ABC-transporter complex. Unlike classic ABC transporters this ECF transporter provides the energy necessary to transport a number of different substrates. This chain is Energy-coupling factor transporter ATP-binding protein EcfA1, found in Streptococcus sanguinis (strain SK36).